We begin with the raw amino-acid sequence, 92 residues long: MPRSLKKGPFIDIALLRKVEQAVEIRDKKPIRTWSRRSTIFPKMVGLTMLIHNGRQHIPVFITEDMVGHKLGEFVLTRTYRGHTADKKVKKR.

It belongs to the universal ribosomal protein uS19 family.

In terms of biological role, protein S19 forms a complex with S13 that binds strongly to the 16S ribosomal RNA. This Buchnera aphidicola subsp. Baizongia pistaciae (strain Bp) protein is Small ribosomal subunit protein uS19.